We begin with the raw amino-acid sequence, 723 residues long: Calpastatin (723 aa).

Disordered regions lie at residues 1–402 (MNPT…PGRC) and 422–509 (STHS…LPPL). A compositionally biased stretch (basic residues) spans 21 to 30 (PNKKRHKKQA). Residue K32 forms a Glycyl lysine isopeptide (Lys-Gly) (interchain with G-Cter in SUMO2) linkage. Residues 46–84 (VVHEKKTQEVKPKEHTEPKSQPKHPSDTRSKHAPKEKAV) are compositionally biased toward basic and acidic residues. K50 carries the post-translational modification N6-acetyllysine. 2 stretches are compositionally biased toward low complexity: residues 85–94 (SKSSEQPPSE) and 113–125 (SAVP…ASAE). At S87 the chain carries Phosphoserine. T137 carries the phosphothreonine modification. The span at 157 to 173 (TALDDLIDTLGEPEETK) shows a compositional bias: acidic residues. An Inhibitory domain 1 repeat occupies 171-224 (ETKEDTTTYTGPEVSDPMSSTYIEELGKREVTLPPKYRELLNKEEGIAGPPPDS). Residues 195 to 216 (ELGKREVTLPPKYRELLNKEEG) show a composition bias toward basic and acidic residues. S224 and S245 each carry phosphoserine. Basic and acidic residues-rich tracts occupy residues 249 to 263 (DAKK…EEAL) and 306 to 367 (PRPE…KPLS). An Inhibitory domain 2 repeat occupies 307–359 (RPELDPSSIKEVDEAKAKEEKVKKCGEDEERVPSEYRLKPATDKDGKPLLPEA). Phosphoserine occurs at positions 367, 369, and 376. Residues 378 to 396 (DFDRSKCKEKQSKPTEKNR) are compositionally biased toward basic and acidic residues. S443 bears the Phosphoserine mark. Residues 445–504 (GKKEADPEDGKPVEDKVKEKAKEEDREKLGEREETIPPDYRLEEAKDKDGKPLPPKEVKE) show a composition bias toward basic and acidic residues. The Inhibitory domain 3 repeat unit spans residues 449 to 502 (ADPEDGKPVEDKVKEKAKEEDREKLGEREETIPPDYRLEEAKDKDGKPLPPKEV). 2 positions are modified to phosphoserine: S519 and S530. Residues 547-723 (SQTPAPTTQA…KPKADGKSTS (177 aa)) are disordered. The segment covering 548 to 560 (QTPAPTTQAAGPP) has biased composition (low complexity). The segment covering 562–571 (DSARDNKELD) has biased composition (basic and acidic residues). Phosphoserine is present on residues S578 and S580. The stretch at 586 to 642 (PDPDEHKPVEDKVKEKAKAEHRDKLGERDDTIPPKYQHLLDDNKEGTPGKPKRSESP) is one Inhibitory domain 4 repeat. The span at 586-643 (PDPDEHKPVEDKVKEKAKAEHRDKLGERDDTIPPKYQHLLDDNKEGTPGKPKRSESPR) shows a compositional bias: basic and acidic residues. Residues 653 to 670 (NLQVPRTPLTPSQGTWTA) are compositionally biased toward polar residues. Over residues 672–690 (PQLQKPQQTQQRTKTRSLL) the composition is skewed to low complexity. The segment covering 701–723 (KAKDSTKAKEETSKPKADGKSTS) has biased composition (basic and acidic residues).

Belongs to the protease inhibitor I27 (calpastatin) family.

Functionally, specific inhibition of calpain (calcium-dependent cysteine protease). Plays a key role in postmortem tenderization of meat and have been proposed to be involved in muscle protein degradation in living tissue. This Ovis aries (Sheep) protein is Calpastatin (CAST).